The chain runs to 206 residues: GTP cyclohydrolase 1 (206 aa).

The Zn(2+) site is built by Cys-95, His-98, and Cys-166.

Belongs to the GTP cyclohydrolase I family. In terms of assembly, toroid-shaped homodecamer, composed of two pentamers of five dimers.

It catalyses the reaction GTP + H2O = 7,8-dihydroneopterin 3'-triphosphate + formate + H(+). The protein operates within cofactor biosynthesis; 7,8-dihydroneopterin triphosphate biosynthesis; 7,8-dihydroneopterin triphosphate from GTP: step 1/1. The sequence is that of GTP cyclohydrolase 1 from Bartonella quintana (strain Toulouse) (Rochalimaea quintana).